Consider the following 259-residue polypeptide: Ubiquitin-conjugating enzyme E2 J2 (259 aa).

At 1-226 the chain is on the cytoplasmic side; it reads MSSTSSKRAP…AGLQQANRHH (226 aa). Residues 12 to 162 form the UBC core domain; that stretch reads TATQRLKQDY…DKVFCELFPE (151 aa). The active-site Glycyl thioester intermediate is the cysteine 94. Residues 227–247 traverse the membrane as a helical; Anchor for type IV membrane protein segment; it reads GLLGGALANLFVIVGFAAFAY. At 248–259 the chain is on the lumenal side; sequence TVKYVLRSIAQE.

This sequence belongs to the ubiquitin-conjugating enzyme family. Post-translationally, auto-ubiquitinated.

It localises to the endoplasmic reticulum membrane. It catalyses the reaction S-ubiquitinyl-[E1 ubiquitin-activating enzyme]-L-cysteine + [E2 ubiquitin-conjugating enzyme]-L-cysteine = [E1 ubiquitin-activating enzyme]-L-cysteine + S-ubiquitinyl-[E2 ubiquitin-conjugating enzyme]-L-cysteine.. It functions in the pathway protein modification; protein ubiquitination. Catalyzes the covalent attachment of ubiquitin to other proteins. Seems to function in the selective degradation of misfolded membrane proteins from the endoplasmic reticulum (ERAD). In cooperation with the GATOR2 complex, catalyzes 'Lys-6'-linked ubiquitination of NPRL2. In Homo sapiens (Human), this protein is Ubiquitin-conjugating enzyme E2 J2 (UBE2J2).